A 54-amino-acid polypeptide reads, in one-letter code: Ovomucoid (54 aa).

The Kazal-like domain occupies 4–54 (VDCSDYPKPSCTLEDKPLCGSDNQTYSNKCSFCNAVVDSNGTLTLSHFGKC). Disulfide bonds link Cys6-Cys36, Cys14-Cys33, and Cys22-Cys54. A glycan (N-linked (GlcNAc...) asparagine) is linked at Asn43.

Its subcellular location is the secreted. In Megapodius freycinet (Dusky scrubfowl), this protein is Ovomucoid.